The primary structure comprises 510 residues: Beta-glucosidase 12 (510 aa).

The signal sequence occupies residues 1–24; it reads MAAAGAMPGGLLLTFLLLAVVASG. Position 53 (Gln-53) interacts with a beta-D-glucoside. Residue Asn-122 is glycosylated (N-linked (GlcNAc...) asparagine). Residues His-157 and 202–203 contribute to the a beta-D-glucoside site; that span reads NE. Glu-203 acts as the Proton donor in catalysis. Intrachain disulfides connect Cys-208–Cys-243 and Cys-222–Cys-230. A glycan (N-linked (GlcNAc...) asparagine) is linked at Asn-229. A beta-D-glucoside is bound at residue Tyr-346. 2 N-linked (GlcNAc...) asparagine glycosylation sites follow: Asn-361 and Asn-371. Glu-417 is a binding site for a beta-D-glucoside. Glu-417 acts as the Nucleophile in catalysis. Asn-425 is a glycosylation site (N-linked (GlcNAc...) asparagine). A beta-D-glucoside contacts are provided by residues Trp-466, 473-474, and Phe-482; that span reads EW.

Belongs to the glycosyl hydrolase 1 family.

Its subcellular location is the secreted. It carries out the reaction Hydrolysis of terminal, non-reducing beta-D-glucosyl residues with release of beta-D-glucose.. Functionally, hydrolyzes p-nitrophenyl beta-D-glucoside, p-nitrophenyl beta-D-galactoside, p-nitrophenyl beta-D-xyloside, p-nitrophenyl beta-D-fucoside, p-nitrophenyl beta-L-arabinoside, cello-oligosaccharides and laminaribiose. The sequence is that of Beta-glucosidase 12 from Oryza sativa subsp. indica (Rice).